Here is a 144-residue protein sequence, read N- to C-terminus: Large ribosomal subunit protein uL16 (144 aa).

This sequence belongs to the universal ribosomal protein uL16 family. In terms of assembly, part of the 50S ribosomal subunit.

Binds 23S rRNA and is also seen to make contacts with the A and possibly P site tRNAs. The sequence is that of Large ribosomal subunit protein uL16 from Bacillus cytotoxicus (strain DSM 22905 / CIP 110041 / 391-98 / NVH 391-98).